We begin with the raw amino-acid sequence, 200 residues long: Protein GrpE (200 aa).

The segment covering 1 to 12 (MSNEEIKNKDEQ) has biased composition (basic and acidic residues). Residues 1–30 (MSNEEIKNKDEQLQQDAVETEAEVVGTDAD) are disordered.

The protein belongs to the GrpE family. Homodimer.

Its subcellular location is the cytoplasm. Participates actively in the response to hyperosmotic and heat shock by preventing the aggregation of stress-denatured proteins, in association with DnaK and GrpE. It is the nucleotide exchange factor for DnaK and may function as a thermosensor. Unfolded proteins bind initially to DnaJ; upon interaction with the DnaJ-bound protein, DnaK hydrolyzes its bound ATP, resulting in the formation of a stable complex. GrpE releases ADP from DnaK; ATP binding to DnaK triggers the release of the substrate protein, thus completing the reaction cycle. Several rounds of ATP-dependent interactions between DnaJ, DnaK and GrpE are required for fully efficient folding. The polypeptide is Protein GrpE (Vibrio cholerae serotype O1 (strain ATCC 39315 / El Tor Inaba N16961)).